The primary structure comprises 906 residues: Protein kintoun (906 aa).

Ser376 bears the Phosphoserine mark. 2 disordered regions span residues 614–691 (QQQK…RKQR) and 793–906 (RKKN…DEDM). Residues 618–631 (KLNKKQRKRNKKQR) are compositionally biased toward basic residues. Residues 639 to 655 (EELKAAQEELQLQHEKQ) show a composition bias toward basic and acidic residues. A compositionally biased stretch (basic residues) spans 793–808 (RKKNQKRRDCKLRAQQ). A Phosphoserine modification is found at Ser812. Residues 837 to 850 (ANAQYFKQPNNNNG) show a composition bias toward polar residues. Basic and acidic residues-rich tracts occupy residues 851–865 (HDQD…HDSG) and 875–887 (NNEE…EADA). Residues 894-906 (EMDDDDEDEDEDM) are compositionally biased toward acidic residues.

This sequence belongs to the PIH1 family. Kintoun subfamily. As to quaternary structure, interacts with Pp1alpha-96A, Pp1-87B, Pp1-13C and flw.

It localises to the cytoplasm. Functionally, required for cytoplasmic pre-assembly of axonemal dyneins, thereby playing a central role in motility in cilia and flagella. Involved in pre-assembly of dynein arm complexes in the cytoplasm before intraflagellar transport loads them for the ciliary compartment. The chain is Protein kintoun from Drosophila virilis (Fruit fly).